The sequence spans 500 residues: Cysteine--tRNA ligase (500 aa).

Cys-30 provides a ligand contact to Zn(2+). The 'HIGH' region signature appears at 32-42 (PTVYDYAHIGN). Cys-224, His-263, and Glu-267 together coordinate Zn(2+). A 'KMSKS' region motif is present at residues 296–300 (KMSKS). An ATP-binding site is contributed by Lys-299.

Belongs to the class-I aminoacyl-tRNA synthetase family. In terms of assembly, monomer. Requires Zn(2+) as cofactor.

It is found in the cytoplasm. It catalyses the reaction tRNA(Cys) + L-cysteine + ATP = L-cysteinyl-tRNA(Cys) + AMP + diphosphate. The chain is Cysteine--tRNA ligase from Bartonella bacilliformis (strain ATCC 35685 / KC583 / Herrer 020/F12,63).